Here is a 1447-residue protein sequence, read N- to C-terminus: DNA-directed RNA polymerase subunit beta' (1447 aa).

4 residues coordinate Zn(2+): cysteine 70, cysteine 72, cysteine 85, and cysteine 88. Mg(2+) is bound by residues aspartate 460, aspartate 462, and aspartate 464. Cysteine 890, cysteine 964, cysteine 971, and cysteine 974 together coordinate Zn(2+).

It belongs to the RNA polymerase beta' chain family. The RNAP catalytic core consists of 2 alpha, 1 beta, 1 beta' and 1 omega subunit. When a sigma factor is associated with the core the holoenzyme is formed, which can initiate transcription. It depends on Mg(2+) as a cofactor. The cofactor is Zn(2+).

It catalyses the reaction RNA(n) + a ribonucleoside 5'-triphosphate = RNA(n+1) + diphosphate. Its function is as follows. DNA-dependent RNA polymerase catalyzes the transcription of DNA into RNA using the four ribonucleoside triphosphates as substrates. The sequence is that of DNA-directed RNA polymerase subunit beta' from Desulfosudis oleivorans (strain DSM 6200 / JCM 39069 / Hxd3) (Desulfococcus oleovorans).